A 251-amino-acid chain; its full sequence is 2,3-bisphosphoglycerate-dependent phosphoglycerate mutase (251 aa).

Residues 7–14 (RHGESEWN), 20–21 (TG), Arg59, 86–89 (ERHY), Lys97, 113–114 (RR), and 186–187 (GN) contribute to the substrate site. Residue His8 is the Tele-phosphohistidine intermediate of the active site. Glu86 functions as the Proton donor/acceptor in the catalytic mechanism.

It belongs to the phosphoglycerate mutase family. BPG-dependent PGAM subfamily.

The catalysed reaction is (2R)-2-phosphoglycerate = (2R)-3-phosphoglycerate. It participates in carbohydrate degradation; glycolysis; pyruvate from D-glyceraldehyde 3-phosphate: step 3/5. Functionally, catalyzes the interconversion of 2-phosphoglycerate and 3-phosphoglycerate. This Treponema pallidum (strain Nichols) protein is 2,3-bisphosphoglycerate-dependent phosphoglycerate mutase.